A 404-amino-acid polypeptide reads, in one-letter code: Phosphoribulokinase, chloroplastic (404 aa).

A chloroplast-targeting transit peptide spans 1 to 53 (MAFCSPHTTTSLRSPCTTIPNSGFRQNQVIFFTTRSSRRSNTRHGARTFQVSC). The cysteines at positions 69 and 108 are disulfide-linked.

Belongs to the phosphoribulokinase family.

Its subcellular location is the plastid. The protein resides in the chloroplast. The catalysed reaction is D-ribulose 5-phosphate + ATP = D-ribulose 1,5-bisphosphate + ADP + H(+). The protein operates within carbohydrate biosynthesis; Calvin cycle. Light regulated via thioredoxin by reversible oxidation/reduction of sulfhydryl/disulfide groups. This Triticum aestivum (Wheat) protein is Phosphoribulokinase, chloroplastic.